A 552-amino-acid chain; its full sequence is Dihydroxy-acid dehydratase (552 aa).

Mg(2+) is bound at residue Asp78. Cys119 lines the [2Fe-2S] cluster pocket. 2 residues coordinate Mg(2+): Asp120 and Lys121. Position 121 is an N6-carboxylysine (Lys121). Residue Cys191 participates in [2Fe-2S] cluster binding. Position 442 (Glu442) interacts with Mg(2+). Ser468 functions as the Proton acceptor in the catalytic mechanism.

It belongs to the IlvD/Edd family. In terms of assembly, homodimer. The cofactor is [2Fe-2S] cluster. Requires Mg(2+) as cofactor.

It catalyses the reaction (2R)-2,3-dihydroxy-3-methylbutanoate = 3-methyl-2-oxobutanoate + H2O. It carries out the reaction (2R,3R)-2,3-dihydroxy-3-methylpentanoate = (S)-3-methyl-2-oxopentanoate + H2O. The protein operates within amino-acid biosynthesis; L-isoleucine biosynthesis; L-isoleucine from 2-oxobutanoate: step 3/4. It participates in amino-acid biosynthesis; L-valine biosynthesis; L-valine from pyruvate: step 3/4. Functions in the biosynthesis of branched-chain amino acids. Catalyzes the dehydration of (2R,3R)-2,3-dihydroxy-3-methylpentanoate (2,3-dihydroxy-3-methylvalerate) into 2-oxo-3-methylpentanoate (2-oxo-3-methylvalerate) and of (2R)-2,3-dihydroxy-3-methylbutanoate (2,3-dihydroxyisovalerate) into 2-oxo-3-methylbutanoate (2-oxoisovalerate), the penultimate precursor to L-isoleucine and L-valine, respectively. The protein is Dihydroxy-acid dehydratase of Caldicellulosiruptor bescii (strain ATCC BAA-1888 / DSM 6725 / KCTC 15123 / Z-1320) (Anaerocellum thermophilum).